The following is a 623-amino-acid chain: (-)-alpha-pinene synthase 1, chloroplastic (623 aa).

The transit peptide at Met-1–Ser-52 directs the protein to the chloroplast. Mg(2+)-binding residues include Asp-374, Asp-378, and Asp-526. A DDXXD motif motif is present at residues Asp-374–Asp-378.

This sequence belongs to the terpene synthase family. Tpsd subfamily. Mg(2+) is required as a cofactor. Mn(2+) serves as cofactor.

It is found in the plastid. The protein localises to the chloroplast. The catalysed reaction is (2E)-geranyl diphosphate = (1S,5S)-alpha-pinene + diphosphate. It carries out the reaction (2E)-geranyl diphosphate = (1S,5S)-beta-pinene + diphosphate. The enzyme catalyses (2E)-geranyl diphosphate = (-)-beta-phellandrene + diphosphate. Its pathway is terpene metabolism; oleoresin biosynthesis. It participates in secondary metabolite biosynthesis; terpenoid biosynthesis. Functionally, monoterpene synthase (TPS) involved in the biosynthesis of monoterpene natural products included in conifer oleoresin secretions and volatile emissions; these compounds contribute to biotic and abiotic stress defense against herbivores and pathogens. Catalyzes the conversion of (2E)-geranyl diphosphate (GPP) to (-)-alpha-pinene and (-)-beta-pinene, and, to a lower extent, to (-)-beta-phellandrene. The sequence is that of (-)-alpha-pinene synthase 1, chloroplastic from Pinus banksiana (Jack pine).